Here is a 417-residue protein sequence, read N- to C-terminus: Gamma-glutamyl phosphate reductase (417 aa).

The protein belongs to the gamma-glutamyl phosphate reductase family.

Its subcellular location is the cytoplasm. It catalyses the reaction L-glutamate 5-semialdehyde + phosphate + NADP(+) = L-glutamyl 5-phosphate + NADPH + H(+). It participates in amino-acid biosynthesis; L-proline biosynthesis; L-glutamate 5-semialdehyde from L-glutamate: step 2/2. Catalyzes the NADPH-dependent reduction of L-glutamate 5-phosphate into L-glutamate 5-semialdehyde and phosphate. The product spontaneously undergoes cyclization to form 1-pyrroline-5-carboxylate. This is Gamma-glutamyl phosphate reductase from Chlorobium phaeobacteroides (strain BS1).